A 504-amino-acid polypeptide reads, in one-letter code: Tyrosine-protein kinase HCK (504 aa).

Gly2 is lipidated: N-myristoyl glycine. The S-palmitoyl cysteine moiety is linked to residue Cys3. At Thr15 the chain carries Phosphothreonine. Tyr30 is subject to Phosphotyrosine. Over residues 34-49 (PTSTIKPGPNSNNRNT) the composition is skewed to polar residues. A disordered region spans residues 34–53 (PTSTIKPGPNSNNRNTPGIG). The region spanning 56–116 (SEDIIVVALY…PSNYVARVDS (61 aa)) is the SH3 domain. Residues 122-219 (WFFKGISRKD…GLCQKLSVPC (98 aa)) form the SH2 domain. The residue at position 180 (Thr180) is a Phosphothreonine. At Tyr187 the chain carries Phosphotyrosine. Residues 240-493 (LKLEKKLGAG…YIQSVLDDFY (254 aa)) enclose the Protein kinase domain. Residues 246-254 (LGAGQFGEV) and Lys268 contribute to the ATP site. The active-site Proton acceptor is the Asp359. Tyr389 carries the phosphotyrosine; by autocatalysis modification. Ser440 carries the phosphoserine modification. A Phosphotyrosine modification is found at Tyr500.

Belongs to the protein kinase superfamily. Tyr protein kinase family. SRC subfamily. Interacts with ADAM15. Interacts with FASLG. Interacts with ARRB1 and ARRB2. Interacts with FCGR1A; the interaction may be indirect. Interacts with IL6ST. Interacts (via SH3 domain) with ELMO1. Interacts (via SH3 domain) with TP73. Interacts with YAP1. Interacts with ABL1 and ITGB1, and thereby recruits ABL1 to activated ITGB1. Interacts (via SH2 domain) with FLT3 (tyrosine phosphorylated). Interacts with CBL. Interacts with VAV1, WAS and RAPGEF1. Interacts (via SH3 domain) with WDCP. In terms of processing, phosphorylated on several tyrosine residues. Autophosphorylated. Becomes rapidly phosphorylated upon activation of the immunoglobulin receptors FCGR1A and FCGR2A. Phosphorylation at Tyr-389 increases kinase activity. Phosphorylation at Tyr-500 inhibits kinase activity. Kinase activity is not required for phosphorylation at Tyr-500, suggesting that this site may be a target of other kinases. Post-translationally, ubiquitinated by CBL, leading to its degradation via the proteasome. Palmitoylation requires prior myristoylation. Palmitoylation is required for caveolar localization.

The protein resides in the cytoplasmic vesicle. The protein localises to the secretory vesicle. It localises to the cytoplasm. Its subcellular location is the cytosol. It is found in the cell membrane. The protein resides in the membrane. The protein localises to the caveola. It localises to the cell junction. Its subcellular location is the focal adhesion. It is found in the cytoskeleton. The protein resides in the golgi apparatus. The protein localises to the lysosome. It localises to the nucleus. It catalyses the reaction L-tyrosyl-[protein] + ATP = O-phospho-L-tyrosyl-[protein] + ADP + H(+). Its activity is regulated as follows. Subject to autoinhibition, mediated by intramolecular interactions involving the SH2 and SH3 domains. Kinase activity is also regulated by phosphorylation at regulatory tyrosine residues. Phosphorylation at Tyr-389 is required for optimal activity. Phosphorylation at Tyr-500 inhibits kinase activity. In terms of biological role, non-receptor tyrosine-protein kinase found in hematopoietic cells that transmits signals from cell surface receptors and plays an important role in the regulation of innate immune responses, including neutrophil, monocyte, macrophage and mast cell functions, phagocytosis, cell survival and proliferation, cell adhesion and migration. Acts downstream of receptors that bind the Fc region of immunoglobulins, such as FCGR1A and FCGR2A, but also CSF3R, PLAUR, the receptors for IFNG, IL2, IL6 and IL8, and integrins, such as ITGB1 and ITGB2. During the phagocytic process, mediates mobilization of secretory lysosomes, degranulation, and activation of NADPH oxidase to bring about the respiratory burst. Plays a role in the release of inflammatory molecules. Promotes reorganization of the actin cytoskeleton and actin polymerization, formation of podosomes and cell protrusions. Inhibits TP73-mediated transcription activation and TP73-mediated apoptosis. Phosphorylates CBL in response to activation of immunoglobulin gamma Fc region receptors. Phosphorylates ADAM15, BCR, ELMO1, FCGR2A, GAB1, GAB2, RAPGEF1, STAT5B, TP73, VAV1 and WAS. The polypeptide is Tyrosine-protein kinase HCK (HCK) (Macaca fascicularis (Crab-eating macaque)).